Consider the following 509-residue polypeptide: tRNA (guanine(37)-N(1))-methyltransferase (509 aa).

S-adenosyl-L-methionine is bound by residues H289, 327–328 (DL), 355–356 (DG), and N387. Residues 478–509 (TRNPENHEDPPLKRQRTAEAFSDEKTQIVSNT) are disordered.

The protein belongs to the class I-like SAM-binding methyltransferase superfamily. TRM5/TYW2 family. Monomer.

The protein localises to the mitochondrion matrix. It localises to the nucleus. The protein resides in the cytoplasm. It carries out the reaction guanosine(37) in tRNA + S-adenosyl-L-methionine = N(1)-methylguanosine(37) in tRNA + S-adenosyl-L-homocysteine + H(+). Its function is as follows. Involved in mitochondrial tRNA methylation. Specifically methylates the N1 position of guanosine-37 in various tRNAs. Methylation is not dependent on the nature of the nucleoside 5' of the target nucleoside. This is the first step in the biosynthesis of wybutosine (yW), a modified base adjacent to the anticodon of tRNAs and required for accurate decoding. The chain is tRNA (guanine(37)-N(1))-methyltransferase from Homo sapiens (Human).